The following is a 369-amino-acid chain: Histidine decarboxylase (369 aa).

H119 serves as a coordination point for substrate. Position 230 is an N6-(pyridoxal phosphate)lysine (K230).

This sequence belongs to the group II decarboxylase family. As to quaternary structure, homotetramer. It depends on pyridoxal 5'-phosphate as a cofactor.

It catalyses the reaction L-histidine + H(+) = histamine + CO2. The protein is Histidine decarboxylase of Mesorhizobium japonicum (strain LMG 29417 / CECT 9101 / MAFF 303099) (Mesorhizobium loti (strain MAFF 303099)).